Consider the following 189-residue polypeptide: ATP-dependent protease subunit HslV (189 aa).

The active site involves Thr12. Residues Ala172, Cys175, and Thr178 each contribute to the Na(+) site.

This sequence belongs to the peptidase T1B family. HslV subfamily. In terms of assembly, a double ring-shaped homohexamer of HslV is capped on each side by a ring-shaped HslU homohexamer. The assembly of the HslU/HslV complex is dependent on binding of ATP.

Its subcellular location is the cytoplasm. The catalysed reaction is ATP-dependent cleavage of peptide bonds with broad specificity.. With respect to regulation, allosterically activated by HslU binding. Protease subunit of a proteasome-like degradation complex believed to be a general protein degrading machinery. The sequence is that of ATP-dependent protease subunit HslV from Anaplasma phagocytophilum (strain HZ).